The chain runs to 264 residues: 2-C-methyl-D-erythritol 4-phosphate cytidylyltransferase (264 aa).

Residues alanine 234 to isoleucine 264 are disordered.

It belongs to the IspD/TarI cytidylyltransferase family. IspD subfamily.

It carries out the reaction 2-C-methyl-D-erythritol 4-phosphate + CTP + H(+) = 4-CDP-2-C-methyl-D-erythritol + diphosphate. It participates in isoprenoid biosynthesis; isopentenyl diphosphate biosynthesis via DXP pathway; isopentenyl diphosphate from 1-deoxy-D-xylulose 5-phosphate: step 2/6. In terms of biological role, catalyzes the formation of 4-diphosphocytidyl-2-C-methyl-D-erythritol from CTP and 2-C-methyl-D-erythritol 4-phosphate (MEP). This is 2-C-methyl-D-erythritol 4-phosphate cytidylyltransferase from Xanthomonas euvesicatoria pv. vesicatoria (strain 85-10) (Xanthomonas campestris pv. vesicatoria).